The following is a 415-amino-acid chain: Packaging protein 3 (415 aa).

Disordered regions lie at residues 1-56 (MHPV…RRRA) and 66-85 (EGLARLGAPSPERHPRVQLK). The segment at 1–173 (MHPVLRQMRP…VNQEINFQKS (173 aa)) is interaction with packaging protein 1. Residues 31–46 (PTASGGATSAADAAAD) are compositionally biased toward low complexity. Phosphoserine; by host is present on serine 75. Over residues 76–85 (PERHPRVQLK) the composition is skewed to basic and acidic residues. Serine 360 carries the post-translational modification Phosphoserine; by host. Low complexity predominate over residues 381 to 394 (GAGPGLAVAPARAG). A disordered region spans residues 381 to 415 (GAGPGLAVAPARAGNVGGVEEYDEDDEYEPEDGEY). Residues 400-415 (EEYDEDDEYEPEDGEY) are compositionally biased toward acidic residues.

This sequence belongs to the adenoviridae packaging protein 3 family. In terms of assembly, part of the genome packaging complex composed of packaging proteins 1, 2 and 3; this complex specifically binds to the packaging sequence on the left end of viral genomic DNA and performs packaging of the viral genome. Interacts with hexon-linking protein IIIa; this interaction is required to promote correct genome packaging. In terms of processing, cleaved at different sites by the viral protease during virion maturation.

It is found in the host nucleus. In terms of biological role, involved in viral genome packaging through its interaction with packaging proteins 1 and 2. After proteolytic cleavage by adenovirus protease, L1 52/55k protein is removed from the capsid during viral maturation. This Human adenovirus C serotype 2 (HAdV-2) protein is Packaging protein 3.